A 195-amino-acid polypeptide reads, in one-letter code: ATP-dependent Clp protease proteolytic subunit (195 aa).

Ser-98 (nucleophile) is an active-site residue. Residue His-123 is part of the active site.

It belongs to the peptidase S14 family. Fourteen ClpP subunits assemble into 2 heptameric rings which stack back to back to give a disk-like structure with a central cavity, resembling the structure of eukaryotic proteasomes.

It localises to the cytoplasm. It catalyses the reaction Hydrolysis of proteins to small peptides in the presence of ATP and magnesium. alpha-casein is the usual test substrate. In the absence of ATP, only oligopeptides shorter than five residues are hydrolyzed (such as succinyl-Leu-Tyr-|-NHMec, and Leu-Tyr-Leu-|-Tyr-Trp, in which cleavage of the -Tyr-|-Leu- and -Tyr-|-Trp bonds also occurs).. In terms of biological role, cleaves peptides in various proteins in a process that requires ATP hydrolysis. Has a chymotrypsin-like activity. Plays a major role in the degradation of misfolded proteins. This is ATP-dependent Clp protease proteolytic subunit from Thermoanaerobacter pseudethanolicus (strain ATCC 33223 / 39E) (Clostridium thermohydrosulfuricum).